Here is a 525-residue protein sequence, read N- to C-terminus: Phospho-2-dehydro-3-deoxyheptonate aldolase 1, chloroplastic (525 aa).

A compositionally biased stretch (polar residues) spans 1-13 (MALSNASSLSTRS). The disordered stretch occupies residues 1-35 (MALSNASSLSTRSIYGGDLSHRPSNRQSSFTFHPA). A chloroplast-targeting transit peptide spans 1–52 (MALSNASSLSTRSIYGGDLSHRPSNRQSSFTFHPAVNTKPKSVNLVTAVHAA).

Belongs to the class-II DAHP synthase family.

The protein resides in the plastid. Its subcellular location is the chloroplast. The catalysed reaction is D-erythrose 4-phosphate + phosphoenolpyruvate + H2O = 7-phospho-2-dehydro-3-deoxy-D-arabino-heptonate + phosphate. Its pathway is metabolic intermediate biosynthesis; chorismate biosynthesis; chorismate from D-erythrose 4-phosphate and phosphoenolpyruvate: step 1/7. This chain is Phospho-2-dehydro-3-deoxyheptonate aldolase 1, chloroplastic (DHS1), found in Arabidopsis thaliana (Mouse-ear cress).